A 24-amino-acid polypeptide reads, in one-letter code: MQWTTPSYTDLRFGFEITMYIANR.

A cross-link (pyrroloquinoline quinone (Glu-Tyr)) is located at residues Glu16–Tyr20.

Belongs to the PqqA family.

It functions in the pathway cofactor biosynthesis; pyrroloquinoline quinone biosynthesis. In terms of biological role, required for coenzyme pyrroloquinoline quinone (PQQ) biosynthesis. PQQ is probably formed by cross-linking a specific glutamate to a specific tyrosine residue and excising these residues from the peptide. In Burkholderia cenocepacia (strain ATCC BAA-245 / DSM 16553 / LMG 16656 / NCTC 13227 / J2315 / CF5610) (Burkholderia cepacia (strain J2315)), this protein is Coenzyme PQQ synthesis protein A.